Consider the following 393-residue polypeptide: CCA-adding enzyme (393 aa).

Glycine 27 and arginine 30 together coordinate ATP. Positions 27 and 30 each coordinate CTP. Mg(2+) is bound by residues aspartate 40 and aspartate 42. ATP-binding residues include arginine 111, aspartate 154, arginine 157, arginine 160, and arginine 163. CTP contacts are provided by arginine 111, aspartate 154, arginine 157, arginine 160, and arginine 163.

The protein belongs to the tRNA nucleotidyltransferase/poly(A) polymerase family. Bacterial CCA-adding enzyme type 3 subfamily. As to quaternary structure, homodimer. Mg(2+) is required as a cofactor.

The enzyme catalyses a tRNA precursor + 2 CTP + ATP = a tRNA with a 3' CCA end + 3 diphosphate. It catalyses the reaction a tRNA with a 3' CCA end + 2 CTP + ATP = a tRNA with a 3' CCACCA end + 3 diphosphate. In terms of biological role, catalyzes the addition and repair of the essential 3'-terminal CCA sequence in tRNAs without using a nucleic acid template. Adds these three nucleotides in the order of C, C, and A to the tRNA nucleotide-73, using CTP and ATP as substrates and producing inorganic pyrophosphate. tRNA 3'-terminal CCA addition is required both for tRNA processing and repair. Also involved in tRNA surveillance by mediating tandem CCA addition to generate a CCACCA at the 3' terminus of unstable tRNAs. While stable tRNAs receive only 3'-terminal CCA, unstable tRNAs are marked with CCACCA and rapidly degraded. The protein is CCA-adding enzyme of Listeria monocytogenes serotype 4b (strain CLIP80459).